The sequence spans 711 residues: GDNF-inducible zinc finger protein 1 (711 aa).

The 73-residue stretch at Cys-31–Glu-103 folds into the BTB domain. Residues Ser-153 to Ala-168 are compositionally biased toward low complexity. Disordered regions lie at residues Ser-153–Arg-220 and Arg-243–Lys-312. Basic and acidic residues-rich tracts occupy residues Pro-197 to Val-212, Arg-243 to Glu-252, and Ser-265 to Ser-277. A compositionally biased stretch (acidic residues) spans Glu-298–Glu-309. 10 consecutive C2H2-type zinc fingers follow at residues Phe-317–His-340, Tyr-348–His-371, Phe-377–His-400, His-407–His-429, Tyr-435–His-457, Phe-463–His-485, Phe-491–His-513, Phe-519–His-541, Tyr-547–His-569, and Phe-575–His-597. Ser-613 carries the phosphoserine modification.

The protein belongs to the krueppel C2H2-type zinc-finger protein family. As to quaternary structure, interacts with NCL. As to expression, expressed in adult brain, heart, skeletal muscle, kidney and liver. Also detected in fetal brain and kidney, and at lower levels in fetal lung and liver.

The protein localises to the cytoplasm. The protein resides in the nucleus. Its subcellular location is the nucleoplasm. It localises to the nucleolus. Functionally, transcriptional repressor that binds the GZF1 responsive element (GRE) (consensus: 5'-TGCGCN[TG][CA]TATA-3'). May be regulating VSX2/HOX10 expression. The chain is GDNF-inducible zinc finger protein 1 from Homo sapiens (Human).